The chain runs to 54 residues: Ovomucoid (54 aa).

In terms of domain architecture, Kazal-like spans 4–54 (VDCSDYPKPACTLEYMPLCGSDNKTYGNKCNFCNAVVDSNGTLTLSHFGKC). Intrachain disulfides connect C6–C36, C14–C33, and C22–C54. N43 is a glycosylation site (N-linked (GlcNAc...) asparagine).

It localises to the secreted. This Dendrocygna arcuata (Wandering whistling-duck) protein is Ovomucoid.